Consider the following 273-residue polypeptide: Orotidine 5'-phosphate decarboxylase (273 aa).

The Proton donor role is filled by lysine 97.

It belongs to the OMP decarboxylase family. Type 2 subfamily.

It carries out the reaction orotidine 5'-phosphate + H(+) = UMP + CO2. It participates in pyrimidine metabolism; UMP biosynthesis via de novo pathway; UMP from orotate: step 2/2. The protein is Orotidine 5'-phosphate decarboxylase of Cellvibrio japonicus (strain Ueda107) (Pseudomonas fluorescens subsp. cellulosa).